Reading from the N-terminus, the 146-residue chain is NADPH-dependent 7-cyano-7-deazaguanine reductase (146 aa).

Cysteine 48 serves as the catalytic Thioimide intermediate. The Proton donor role is filled by aspartate 55. Substrate contacts are provided by residues 70–72 (VES) and 89–90 (HE).

Belongs to the GTP cyclohydrolase I family. QueF type 1 subfamily.

It is found in the cytoplasm. It catalyses the reaction 7-aminomethyl-7-carbaguanine + 2 NADP(+) = 7-cyano-7-deazaguanine + 2 NADPH + 3 H(+). Its pathway is tRNA modification; tRNA-queuosine biosynthesis. Functionally, catalyzes the NADPH-dependent reduction of 7-cyano-7-deazaguanine (preQ0) to 7-aminomethyl-7-deazaguanine (preQ1). The chain is NADPH-dependent 7-cyano-7-deazaguanine reductase from Helicobacter pylori (strain Shi470).